We begin with the raw amino-acid sequence, 921 residues long: Inter-alpha-trypsin inhibitor heavy chain H4 (921 aa).

A signal peptide spans 1 to 27 (MKTLSPTGYGLLLVLPLLLAVLQSTTA). One can recognise a VIT domain in the interval 28–146 (HKNDINIYSL…KVTFELVYEE (119 aa)). Asn-80, Asn-205, and Asn-242 each carry an N-linked (GlcNAc...) asparagine glycan. One can recognise a VWFA domain in the interval 270–428 (PKNVIFVIDT…YAFLEKMALE (159 aa)). N-linked (GlcNAc...) asparagine glycans are attached at residues Asn-513 and Asn-577. The segment at 591–646 (KPEGQEQSQVAEKPVENGNRQGNTHSGHSSFQFHSVGDRTSRLTGGSSVDPVFSHR) is disordered. Residues 608–623 (GNRQGNTHSGHSSFQF) are compositionally biased toward polar residues. Residue Thr-712 is glycosylated (O-linked (GalNAc...) threonine). Cysteines 738 and 916 form a disulfide.

This sequence belongs to the ITIH family. Interacts (via C-terminus) with DNAJC1 (via SANT 2 domain). Post-translationally, appears to be both N- and O-glycosylated. Cleaved by plasma kallikrein to yield 55- and 25-kDa fragments. As to expression, liver specific.

The protein localises to the secreted. Its function is as follows. Type II acute-phase protein (APP) involved in inflammatory responses to trauma. May also play a role in liver development or regeneration. The sequence is that of Inter-alpha-trypsin inhibitor heavy chain H4 (ITIH4) from Sus scrofa (Pig).